The chain runs to 550 residues: Envelope glycoprotein E (550 aa).

The first 20 residues, 1–20 (MDRGAVVGFLLGVCVVSCLA), serve as a signal peptide directing secretion. At 21-419 (GTPKTSWRRV…HAPPTHGALR (399 aa)) the chain is on the virion surface side. An interaction with gI region spans residues 63–88 (CGPLHPSWVSLMPPKQVPETVVDAAC). N-linked (GlcNAc...) asparagine; by host glycosylation is present at asparagine 124. Residues 162–214 (QPAPVPTPPPTPADYDEDDNDEGEDESLAGTPASGTPRLPPPPAPPRSWPSAP) form a disordered region. Residues 164 to 173 (APVPTPPPTP) are compositionally biased toward pro residues. The span at 175-188 (DYDEDDNDEGEDES) shows a compositional bias: acidic residues. Tyrosine 176 carries the post-translational modification Sulfotyrosine; by host. Residues 199–209 (RLPPPPAPPRS) show a composition bias toward pro residues. The interval 235–380 (SPGETFSTNV…GHITISTAAQ (146 aa)) is fc-binding. Asparagine 243 carries N-linked (GlcNAc...) asparagine; by host glycosylation. 3 disulfide bridges follow: cysteine 271–cysteine 297, cysteine 280–cysteine 289, and cysteine 314–cysteine 323. Residues 394-413 (GADLAEPTHPHVGAPPHAPP) form a disordered region. Residues 403–413 (PHVGAPPHAPP) show a composition bias toward low complexity. Residues 420-440 (LGAVMGAALLLSALGLSVWAC) traverse the membrane as a helical segment. The Intravirion portion of the chain corresponds to 441–550 (MTCWRRRAWR…SQASDSSVFW (110 aa)). 2 consecutive short sequence motifs (internalization motif) follow at residues 463 to 466 (YIRV) and 472 to 475 (YADW). The segment at 470-495 (ELYADWSSDSEGERDQVPWLAPPERP) is interaction with VP22 and UL11. Serine 476 and serine 477 each carry phosphoserine; by host CK2. The acidic stretch occupies residues 476–484 (SSDSEGERD). The interval 476–550 (SSDSEGERDQ…SQASDSSVFW (75 aa)) is disordered. Serine 503 carries the phosphoserine modification. Over residues 541 to 550 (SQASDSSVFW) the composition is skewed to polar residues.

It belongs to the alphaherpesvirinae glycoprotein E family. As to quaternary structure, interacts with gI; this interaction enhances the Fc receptor function of gE. The heterodimer gE/gI interacts with the Fc part of host IgG. Interacts (via C-terminus) with VP22 tegument protein; this interaction is necessary for the recruitment of VP22 to the Golgi and its packaging into virions. Interacts (via C-terminus) with UL11 tegument protein. Post-translationally, phosphorylated on serines within the acidic cluster. Phosphorylation determines whether endocytosed viral gE traffics to the trans-Golgi network or recycles to the cell membrane. N-glycosylated, and sulfated.

Its subcellular location is the virion membrane. The protein resides in the host cell membrane. The protein localises to the host cell junction. It localises to the host Golgi apparatus membrane. It is found in the host endosome membrane. In epithelial cells, the heterodimer gE/gI is required for the cell-to-cell spread of the virus, by sorting nascent virions to cell junctions. Once the virus reaches the cell junctions, virus particles can spread to adjacent cells extremely rapidly through interactions with cellular receptors that accumulate at these junctions. Implicated in basolateral spread in polarized cells. In neuronal cells, gE/gI is essential for the anterograde spread of the infection throughout the host nervous system. Together with US9, the heterodimer gE/gI is involved in the sorting and transport of viral structural components toward axon tips. In terms of biological role, the heterodimer gE/gI serves as a receptor for the Fc part of host IgG. Dissociation of gE/gI from IgG occurs at acidic pH. May thus be involved in anti-HSV antibodies bipolar bridging, followed by intracellular endocytosis and degradation, thereby interfering with host IgG-mediated immune responses. The polypeptide is Envelope glycoprotein E (gE) (Human herpesvirus 1 (strain 17) (HHV-1)).